Here is a 788-residue protein sequence, read N- to C-terminus: Putative wall-associated receptor kinase-like 11 (788 aa).

A signal peptide spans 1–27 (MRCDNNYSFSILFSLLLILILDSKVVS). Residues 28–375 (LSTSCQSKSV…TFNCIGNKTR (348 aa)) are Extracellular-facing. N-linked (GlcNAc...) asparagine glycosylation is found at Asn-65, Asn-80, Asn-121, Asn-159, Asn-233, Asn-253, Asn-278, Asn-295, and Asn-310. Positions 306–369 (CICNNVTISG…CVNLPGTFNC (64 aa)) are atypical EGF-like. Disulfide bonds link Cys-308–Cys-321, Cys-343–Cys-360, and Cys-354–Cys-369. N-linked (GlcNAc...) asparagine glycosylation is present at Asn-372. A helical membrane pass occupies residues 376-396 (VTMIGVGSAFGILVLVVGIWW). Residues 397 to 788 (LRKFLKKRRM…QPLFPHPTWI (392 aa)) lie on the Cytoplasmic side of the membrane. One can recognise a Protein kinase domain in the interval 451-726 (FSESRILGQG…KVFTDLEKIL (276 aa)). Residues 457–465 (LGQGGQGTV) and Lys-479 contribute to the ATP site. The residue at position 524 (Tyr-524) is a Phosphotyrosine. Residue Asp-576 is the Proton acceptor of the active site. Thr-610 and Thr-615 each carry phosphothreonine. A Phosphotyrosine modification is found at Tyr-623.

The protein belongs to the protein kinase superfamily. Ser/Thr protein kinase family.

It localises to the membrane. The catalysed reaction is L-seryl-[protein] + ATP = O-phospho-L-seryl-[protein] + ADP + H(+). It catalyses the reaction L-threonyl-[protein] + ATP = O-phospho-L-threonyl-[protein] + ADP + H(+). Its function is as follows. Putative serine/threonine-protein kinase that may function as a signaling receptor of extracellular matrix component. This is Putative wall-associated receptor kinase-like 11 (WAKL11) from Arabidopsis thaliana (Mouse-ear cress).